Consider the following 534-residue polypeptide: Serine/threonine-protein kinase Nek6 (534 aa).

The 254-residue stretch at 4 to 257 (YEVVEQIGRG…AGELLRHPYL (254 aa)) folds into the Protein kinase domain. Residues 10 to 18 (IGRGAYGSA) and Lys33 contribute to the ATP site. The active-site Proton acceptor is the Asp129. Disordered stretches follow at residues 278 to 306 (KSNL…SSEA) and 425 to 449 (KAHT…SSPK).

The protein belongs to the protein kinase superfamily. NEK Ser/Thr protein kinase family. NIMA subfamily. Interacts with DIS1. Post-translationally, ubiquitinated by the E3 ligase DIS1. Ubiquitination of NEK6 leads to its degradation via the 26S proteasome-dependent pathway. In terms of tissue distribution, expressed in anthers, pistils and leaves.

Its subcellular location is the cytoplasm. It carries out the reaction L-seryl-[protein] + ATP = O-phospho-L-seryl-[protein] + ADP + H(+). It catalyses the reaction L-threonyl-[protein] + ATP = O-phospho-L-threonyl-[protein] + ADP + H(+). Functionally, may be involved in plant development processes. In Oryza sativa subsp. japonica (Rice), this protein is Serine/threonine-protein kinase Nek6.